Consider the following 728-residue polypeptide: Beta-galactosidase 12 (728 aa).

A signal peptide spans 1-27 (MGLNFREKAWILLGILCCSSLICSVKA). The active-site Proton donor is E185. E254 functions as the Nucleophile in the catalytic mechanism. N-linked (GlcNAc...) asparagine glycosylation is found at N255, N380, and N450.

Belongs to the glycosyl hydrolase 35 family. In terms of tissue distribution, ubiquitous, with higher expression levels in roots and siliques.

It is found in the secreted. The protein localises to the extracellular space. The protein resides in the apoplast. The catalysed reaction is Hydrolysis of terminal non-reducing beta-D-galactose residues in beta-D-galactosides.. This chain is Beta-galactosidase 12 (BGAL12), found in Arabidopsis thaliana (Mouse-ear cress).